The primary structure comprises 94 residues: Large ribosomal subunit protein bL25 (94 aa).

The protein belongs to the bacterial ribosomal protein bL25 family. In terms of assembly, part of the 50S ribosomal subunit; part of the 5S rRNA/L5/L18/L25 subcomplex. Contacts the 5S rRNA. Binds to the 5S rRNA independently of L5 and L18.

Its function is as follows. This is one of the proteins that binds to the 5S RNA in the ribosome where it forms part of the central protuberance. This Salmonella arizonae (strain ATCC BAA-731 / CDC346-86 / RSK2980) protein is Large ribosomal subunit protein bL25.